A 178-amino-acid polypeptide reads, in one-letter code: Large ribosomal subunit protein bL25 (178 aa).

This sequence belongs to the bacterial ribosomal protein bL25 family. CTC subfamily. As to quaternary structure, part of the 50S ribosomal subunit; part of the 5S rRNA/L5/L18/L25 subcomplex. Contacts the 5S rRNA. Binds to the 5S rRNA independently of L5 and L18.

Functionally, this is one of the proteins that binds to the 5S RNA in the ribosome where it forms part of the central protuberance. The polypeptide is Large ribosomal subunit protein bL25 (Helicobacter pylori (strain P12)).